The following is a 198-amino-acid chain: Inositol diphosphatase DSP4 (198 aa).

The segment at 1–23 (MTLESYAGDVHTVPQSENSMEER) is disordered. Positions 34–188 (NFAMVDNGIF…LKHTPLSFSC (155 aa)) constitute a Tyrosine-protein phosphatase domain. The interval 90–102 (FGIERCKEPFVNI) is WPD loop important for active site topology. 2 residues coordinate 1D-myo-inositol hexakisphosphate: Asn-101 and Ile-102. Cys-126 functions as the Phosphocysteine intermediate in the catalytic mechanism.

It belongs to the protein-tyrosine phosphatase family. Atypical dual-specificity phosphatase Siw14-like subfamily. Highly expressed in flowers and at lower levels in roots, leaves, stems and siliques.

It carries out the reaction 5-diphospho-1D-myo-inositol 1,2,3,4,6-pentakisphosphate + H2O = 1D-myo-inositol hexakisphosphate + phosphate + H(+). The enzyme catalyses 1,5-bis(diphospho)-1D-myo-inositol 2,3,4,6-tetrakisphosphate + H2O = 1-diphospho-1D-myo-inositol 2,3,4,5,6-pentakisphosphate + phosphate + 2 H(+). The catalysed reaction is 3,5-bis(diphospho)-1D-myo-inositol 1,2,4,6-tetrakisphosphate + H2O = 3-diphospho-1D-myo-inositol 1,2,4,5,6-pentakisphosphate + phosphate + 2 H(+). It catalyses the reaction 6-diphospho-1D-myo-inositol pentakisphosphate + H2O = 1D-myo-inositol hexakisphosphate + phosphate + H(+). In terms of biological role, cleaves the beta-phosphate at the 5-position of soluble inositol pyrophosphates. Has highest activity on 5-diphosphoinositol 1,2,3,4,6-pentakisphosphate (5-InsP(7)), 1,5-bis-diphosphoinositol 2,3,4,6-tetrakisphosphate (1,5-InsP(8)) and 3,5-InsP(8). Acts as a negative regulator of defense responses against the bacterial pathogen Pseudomonas syringae pv tomato strain DC3000. This is Inositol diphosphatase DSP4 from Arabidopsis thaliana (Mouse-ear cress).